The sequence spans 493 residues: D-glyceraldehyde dehydrogenase (NADP(+)) (493 aa).

A coiled-coil region spans residues 70-92 (RAKELIEKNRAELENIIMEENGK). Residues 146-149 (TPWN), arginine 157, 172-176 (KPSSD), 204-210 (RGSEIGD), 225-248 (GSTA…ILEL), cysteine 281, and 381-383 (EIF) contribute to the NADP(+) site. Asparagine 149 and arginine 157 together coordinate substrate. The active-site Proton acceptor is the glutamate 247. Cysteine 281 contributes to the substrate binding site. Cysteine 281 (proton donor) is an active-site residue.

The protein belongs to the aldehyde dehydrogenase family. Glyceraldehyde dehydrogenase subfamily. In terms of assembly, homotetramer. Dimer of dimers.

It catalyses the reaction D-glyceraldehyde + NADP(+) + H2O = (R)-glycerate + NADPH + 2 H(+). Its pathway is carbohydrate degradation; glycolysis. Inhibited by calcium, cadmium, copper and mercury ions. Stable for 2 hours at 60 degrees Celsius but activity is decreased to less than 50 percent within 20 minutes at 80 degrees Celsius. Two folds activity enhancement in the presence of 1 mM glutathione, DTT, or 2-mercaptoethanol. Complete activity inhibition by thiol-modifying reagents such as p-chloromercuribenzoic acid or p-hydroxy-mercuribenzoic acid. Its function is as follows. NADP-dependent dehydrogenase of the nED (non-phosphorylated Entner-Doudoroff) pathway with highest activity towards glyceraldehydes (e.g. D,L-glyceraldehyde and D-glyceraldehyde), to a lesser extent towards D,L-glyceraldehyde-3-phosphate and glycolaldehyde, but no activity towards aliphatic or aromatic aldehydes. The polypeptide is D-glyceraldehyde dehydrogenase (NADP(+)) (Thermoplasma acidophilum (strain ATCC 25905 / DSM 1728 / JCM 9062 / NBRC 15155 / AMRC-C165)).